The chain runs to 199 residues: ATP-dependent Clp protease proteolytic subunit 2 (199 aa).

The active-site Nucleophile is serine 98. Histidine 123 is a catalytic residue.

The protein belongs to the peptidase S14 family. In terms of assembly, fourteen ClpP subunits assemble into 2 heptameric rings which stack back to back to give a disk-like structure with a central cavity, resembling the structure of eukaryotic proteasomes.

It is found in the cytoplasm. It carries out the reaction Hydrolysis of proteins to small peptides in the presence of ATP and magnesium. alpha-casein is the usual test substrate. In the absence of ATP, only oligopeptides shorter than five residues are hydrolyzed (such as succinyl-Leu-Tyr-|-NHMec, and Leu-Tyr-Leu-|-Tyr-Trp, in which cleavage of the -Tyr-|-Leu- and -Tyr-|-Trp bonds also occurs).. Cleaves peptides in various proteins in a process that requires ATP hydrolysis. Has a chymotrypsin-like activity. Plays a major role in the degradation of misfolded proteins. The chain is ATP-dependent Clp protease proteolytic subunit 2 from Corynebacterium diphtheriae (strain ATCC 700971 / NCTC 13129 / Biotype gravis).